Consider the following 394-residue polypeptide: Phosphopentomutase (394 aa).

Mn(2+) is bound by residues Asp-14, Asp-287, His-292, Asp-328, His-329, and His-340.

It belongs to the phosphopentomutase family. Mn(2+) is required as a cofactor.

The protein resides in the cytoplasm. The enzyme catalyses 2-deoxy-alpha-D-ribose 1-phosphate = 2-deoxy-D-ribose 5-phosphate. The catalysed reaction is alpha-D-ribose 1-phosphate = D-ribose 5-phosphate. The protein operates within carbohydrate degradation; 2-deoxy-D-ribose 1-phosphate degradation; D-glyceraldehyde 3-phosphate and acetaldehyde from 2-deoxy-alpha-D-ribose 1-phosphate: step 1/2. Isomerase that catalyzes the conversion of deoxy-ribose 1-phosphate (dRib-1-P) and ribose 1-phosphate (Rib-1-P) to deoxy-ribose 5-phosphate (dRib-5-P) and ribose 5-phosphate (Rib-5-P), respectively. The protein is Phosphopentomutase of Listeria monocytogenes serotype 4a (strain HCC23).